Here is a 163-residue protein sequence, read N- to C-terminus: UPF0262 protein RPC_4416 (163 aa).

This sequence belongs to the UPF0262 family.

The sequence is that of UPF0262 protein RPC_4416 from Rhodopseudomonas palustris (strain BisB18).